The sequence spans 476 residues: Bifunctional protein HldE (476 aa).

A ribokinase region spans residues Met1–Ser319. Asn195 to Glu198 is an ATP binding site. Asp264 is a catalytic residue. A cytidylyltransferase region spans residues Met345 to Gln476.

This sequence in the N-terminal section; belongs to the carbohydrate kinase PfkB family. In the C-terminal section; belongs to the cytidylyltransferase family. Homodimer.

The catalysed reaction is D-glycero-beta-D-manno-heptose 7-phosphate + ATP = D-glycero-beta-D-manno-heptose 1,7-bisphosphate + ADP + H(+). The enzyme catalyses D-glycero-beta-D-manno-heptose 1-phosphate + ATP + H(+) = ADP-D-glycero-beta-D-manno-heptose + diphosphate. The protein operates within nucleotide-sugar biosynthesis; ADP-L-glycero-beta-D-manno-heptose biosynthesis; ADP-L-glycero-beta-D-manno-heptose from D-glycero-beta-D-manno-heptose 7-phosphate: step 1/4. It participates in nucleotide-sugar biosynthesis; ADP-L-glycero-beta-D-manno-heptose biosynthesis; ADP-L-glycero-beta-D-manno-heptose from D-glycero-beta-D-manno-heptose 7-phosphate: step 3/4. Functionally, catalyzes the phosphorylation of D-glycero-D-manno-heptose 7-phosphate at the C-1 position to selectively form D-glycero-beta-D-manno-heptose-1,7-bisphosphate. Its function is as follows. Catalyzes the ADP transfer from ATP to D-glycero-beta-D-manno-heptose 1-phosphate, yielding ADP-D-glycero-beta-D-manno-heptose. This is Bifunctional protein HldE from Shewanella baltica (strain OS195).